The following is a 302-amino-acid chain: G-protein coupled receptor A5 (302 aa).

Over 1–20 the chain is Extracellular; the sequence is MADSSNSSLNCTAIHDQTVL. Residues 21–41 traverse the membrane as a helical segment; it reads ILGQVFNSVWLFISVIFLYIF. Residues 42-50 lie on the Cytoplasmic side of the membrane; it reads ACKLCFRPR. Residues 51 to 71 traverse the membrane as a helical segment; the sequence is IYLWLSFYTLGFMLWVLCKVL. At 72-81 the chain is on the extracellular side; sequence QEYVTGKFKC. The chain crosses the membrane as a helical span at residues 82-102; sequence VITNCIGDFCLVFLSCIMLGI. The Cytoplasmic segment spans residues 103–122; sequence MLDRYLKIQGTLRGGMKDIH. The helical transmembrane segment at 123 to 143 threads the bilayer; the sequence is IGIFVSASCFGSLMIALLDGL. Over 144 to 173 the chain is Extracellular; it reads HMGDSEKLQFNGTESFKCLPATSVSSYKAQ. The chain crosses the membrane as a helical span at residues 174–194; that stretch reads LMFKSIFCIICIIMCLILTCL. Topologically, residues 195–208 are cytoplasmic; that stretch reads TAKKVLGTRLRKKY. The chain crosses the membrane as a helical span at residues 209-229; sequence VIVGNVGLLSFVNILLWVMIA. At 230 to 249 the chain is on the extracellular side; the sequence is CGLLKQALESNLSLCPTKQS. The chain crosses the membrane as a helical span at residues 250 to 270; it reads TYIYPYTMPVTVIFVLVIYLF. Over 271-302 the chain is Cytoplasmic; that stretch reads SSTHMKNAMRKSGQIRHSLSSPNQVQSSFRLV.

Belongs to the G-protein coupled receptor 1 family.

Its subcellular location is the host cell membrane. It is found in the host endoplasmic reticulum membrane. Its function is as follows. Acts as a viral G-protein coupled receptor that constitutively activates host alphai-type G-proteins, thereby inhibiting host forskolin-triggered CREB activation. This chain is G-protein coupled receptor A5 (A5), found in Connochaetes taurinus (Blue wildebeest).